The sequence spans 274 residues: 2-amino-4,5-dihydroxy-6-oxo-7-(phosphonooxy)heptanoate synthase (274 aa).

This sequence belongs to the DeoC/FbaB aldolase family. GriI subfamily. As to quaternary structure, homodecamer.

The enzyme catalyses 2-amino-4,5-dihydroxy-6-oxo-7-(phosphooxy)heptanoate = L-aspartate 4-semialdehyde + dihydroxyacetone phosphate. In terms of biological role, catalyzes aldol condensation between L-aspartate-4-semialdehyde (ASA) and dihydroxyacetone phosphate (DHAP), to form 2-amino-4,5-dihydroxy-6-oxo-7-(phosphonooxy)heptanoate. This Streptomyces griseus subsp. griseus (strain JCM 4626 / CBS 651.72 / NBRC 13350 / KCC S-0626 / ISP 5235) protein is 2-amino-4,5-dihydroxy-6-oxo-7-(phosphonooxy)heptanoate synthase (griI).